A 294-amino-acid polypeptide reads, in one-letter code: ATP synthase gamma chain (294 aa).

Belongs to the ATPase gamma chain family. As to quaternary structure, F-type ATPases have 2 components, CF(1) - the catalytic core - and CF(0) - the membrane proton channel. CF(1) has five subunits: alpha(3), beta(3), gamma(1), delta(1), epsilon(1). CF(0) has three main subunits: a, b and c.

The protein localises to the cell inner membrane. In terms of biological role, produces ATP from ADP in the presence of a proton gradient across the membrane. The gamma chain is believed to be important in regulating ATPase activity and the flow of protons through the CF(0) complex. The sequence is that of ATP synthase gamma chain from Campylobacter jejuni subsp. jejuni serotype O:2 (strain ATCC 700819 / NCTC 11168).